Here is a 310-residue protein sequence, read N- to C-terminus: Putative S-adenosyl-L-methionine-dependent methyltransferase MUL_4762 (310 aa).

Residues D132 and 161–162 contribute to the S-adenosyl-L-methionine site; that span reads DL.

Belongs to the UPF0677 family.

Functionally, exhibits S-adenosyl-L-methionine-dependent methyltransferase activity. The protein is Putative S-adenosyl-L-methionine-dependent methyltransferase MUL_4762 of Mycobacterium ulcerans (strain Agy99).